The following is a 510-amino-acid chain: Ectonucleoside triphosphate diphosphohydrolase 1 (510 aa).

Topologically, residues 1-16 (MEDRRESELKTFCSKN) are cytoplasmic. The helical transmembrane segment at 17 to 37 (ILVILGFSSIIAVIALLALGL) threads the bilayer. The Extracellular portion of the chain corresponds to 38–477 (TQNKPLPENV…SSTRLSHSTY (440 aa)). Residue N73 is glycosylated (N-linked (GlcNAc...) asparagine). C84 and C108 are oxidised to a cystine. Residue E174 is the Proton acceptor of the active site. N-linked (GlcNAc...) asparagine glycans are attached at residues N245, N274, N291, and N333. 2 disulfides stabilise this stretch: C255–C300 and C281–C324. C337 and C342 form a disulfide bridge. A glycan (N-linked (GlcNAc...) asparagine) is linked at N370. An intrachain disulfide couples C390 to C413. An N-linked (GlcNAc...) asparagine glycan is attached at N457. Residues 478 to 498 (VFLMVLFSLILVIVVIIGLFV) form a helical membrane-spanning segment. Over 499 to 510 (CHRPSYFWKDMV) the chain is Cytoplasmic.

Belongs to the GDA1/CD39 NTPase family. As to quaternary structure, homodimer; disulfide-linked. Ca(2+) is required as a cofactor. The cofactor is Mg(2+). N-glycosylated. In terms of processing, cleaved into two polypeptides that seem to stay together by non-covalent interactions. Post-translationally, the N-terminus is blocked. Palmitoylated on Cys-13; which is required for caveola targeting. In terms of tissue distribution, highest expression found in vascular endothelium, smooth muscle, spleen and lung (at protein level). High expression also found in stomach, duodenum, kidney, lymph node and aorta (at protein level).

Its subcellular location is the membrane. The protein localises to the caveola. The catalysed reaction is a ribonucleoside 5'-triphosphate + 2 H2O = a ribonucleoside 5'-phosphate + 2 phosphate + 2 H(+). It catalyses the reaction a ribonucleoside 5'-triphosphate + H2O = a ribonucleoside 5'-diphosphate + phosphate + H(+). The enzyme catalyses a ribonucleoside 5'-diphosphate + H2O = a ribonucleoside 5'-phosphate + phosphate + H(+). It carries out the reaction ATP + 2 H2O = AMP + 2 phosphate + 2 H(+). The catalysed reaction is ATP + H2O = ADP + phosphate + H(+). It catalyses the reaction ADP + H2O = AMP + phosphate + H(+). The enzyme catalyses CTP + 2 H2O = CMP + 2 phosphate + 2 H(+). It carries out the reaction CTP + H2O = CDP + phosphate + H(+). The catalysed reaction is CDP + H2O = CMP + phosphate + H(+). It catalyses the reaction GTP + 2 H2O = GMP + 2 phosphate + 2 H(+). The enzyme catalyses GTP + H2O = GDP + phosphate + H(+). It carries out the reaction GDP + H2O = GMP + phosphate + H(+). The catalysed reaction is ITP + 2 H2O = IMP + 2 phosphate + 2 H(+). It catalyses the reaction ITP + H2O = IDP + phosphate + H(+). The enzyme catalyses IDP + H2O = IMP + phosphate + H(+). It carries out the reaction UTP + 2 H2O = UMP + 2 phosphate + 2 H(+). The catalysed reaction is UTP + H2O = UDP + phosphate + H(+). It catalyses the reaction UDP + H2O = UMP + phosphate + H(+). The ATP diphosphohydrolase activity is decreased by half by sodium azide. In terms of biological role, catalyzes the hydrolysis of both di- and triphosphate nucleotides (NDPs and NTPs) and hydrolyze NTPs to nucleotide monophosphates (NMPs) in two distinct successive phosphate-releasing steps, with NDPs as intermediates and participates in the regulation of extracellular levels of nucleotides. By hydrolyzing proinflammatory ATP and platelet-activating ADP to AMP, it blocks platelet aggregation and supports blood flow. This is Ectonucleoside triphosphate diphosphohydrolase 1 from Sus scrofa (Pig).